The following is a 333-amino-acid chain: Phenylalanine--tRNA ligase alpha subunit (333 aa).

Residue E254 participates in Mg(2+) binding.

Belongs to the class-II aminoacyl-tRNA synthetase family. Phe-tRNA synthetase alpha subunit type 1 subfamily. Tetramer of two alpha and two beta subunits. Mg(2+) is required as a cofactor.

It is found in the cytoplasm. The enzyme catalyses tRNA(Phe) + L-phenylalanine + ATP = L-phenylalanyl-tRNA(Phe) + AMP + diphosphate + H(+). In Xylella fastidiosa (strain M23), this protein is Phenylalanine--tRNA ligase alpha subunit.